The sequence spans 405 residues: Tryptophan synthase beta chain (405 aa).

The residue at position 98 (lysine 98) is an N6-(pyridoxal phosphate)lysine.

This sequence belongs to the TrpB family. Tetramer of two alpha and two beta chains. Pyridoxal 5'-phosphate serves as cofactor.

The catalysed reaction is (1S,2R)-1-C-(indol-3-yl)glycerol 3-phosphate + L-serine = D-glyceraldehyde 3-phosphate + L-tryptophan + H2O. It functions in the pathway amino-acid biosynthesis; L-tryptophan biosynthesis; L-tryptophan from chorismate: step 5/5. In terms of biological role, the beta subunit is responsible for the synthesis of L-tryptophan from indole and L-serine. The sequence is that of Tryptophan synthase beta chain from Xanthomonas axonopodis pv. citri (strain 306).